A 39-amino-acid chain; its full sequence is Cytochrome b6-f complex subunit 5 (39 aa).

A helical membrane pass occupies residues 5-25; the sequence is LLCGIVLGLVPVTLLGLFVSA.

It belongs to the PetG family. In terms of assembly, the 4 large subunits of the cytochrome b6-f complex are cytochrome b6, subunit IV (17 kDa polypeptide, PetD), cytochrome f and the Rieske protein, while the 4 small subunits are PetG, PetL, PetM and PetN. The complex functions as a dimer.

It localises to the cellular thylakoid membrane. Functionally, component of the cytochrome b6-f complex, which mediates electron transfer between photosystem II (PSII) and photosystem I (PSI), cyclic electron flow around PSI, and state transitions. PetG is required for either the stability or assembly of the cytochrome b6-f complex. In Prochlorococcus marinus (strain NATL1A), this protein is Cytochrome b6-f complex subunit 5.